The sequence spans 785 residues: MTTLLNNHHNNNSLPIQISQQHVLINSNQNESNQPSSLFNSISPQKKLSPTLNSTSIPPPPPSSSSKYPLELSEKGQICNLKINLDKSYFTNGETISGKVNILLTERQCIKRVKLQLCGYEKIFQHAQHSNNTYQTFKFYSGNLNIPPLNVNIETTSLNSLPISNSENNSPILLPTTTSTQNSTLSPTLLSSNLNSKSSTTTTTTTGMMSSVSSLSSSFSQQLTTPIHEFESGVYEYPFSFQLPKYLAPSLNYIGYLSIFYLVHCKVDYSKGREWKDQKVMKSSELWISGINKQYQDYLLYNKTHFTSHKLAHYLNWLSFGTNTNSNNSNNNNNNNNNNNNNNNNNNNNNNNNNNNNNNQPSTITNNNINNNNNIGISNNYKSNPIEMAICLRENNCYIGSKATFFIQLKNPLNLKINSIRVELFQQISFIKTLSNSNSSSSGGSSNKNNNGGGIGNDRISNIQKSNKKSSGSHRYHYRNNSSDHNIDKTKVSQTQILLHNYDCRELFKNQTTTSSSSSQEILCSTNLQILIPFKIEDDQVFPTTRGFLSTVKHFFIISIPSISNFKLKIPVHLWQRFDDNNFTTISNNIHSLPFHTSNSFGNIRNSYSSSGSGSGSGSSNSNSNHSSSNYLNEQEENLDEQQQQNYDDEFYDDEDDEDNDRFKLNPPKEWKVLWLPKWKDESSITNCNLCDNTFTIIRRTHHCRACGGVFCEACSNQKVCLYGFGVNNKVRICLMCFDAVKAESSNSIYGSNINSSILPFKNGLPLQNVFSKKKVYKPPYLVHL.

5 disordered regions span residues 29–69 (QNES…SKYP), 172–205 (ILLP…TTTT), 326–367 (SNNS…ITNN), 435–486 (SNSN…SDHN), and 608–642 (YSSS…LDEQ). The span at 173–205 (LLPTTTSTQNSTLSPTLLSSNLNSKSSTTTTTT) shows a compositional bias: low complexity. Residues 435-450 (SNSNSSSSGGSSNKNN) are compositionally biased toward low complexity. Over residues 466–478 (SNKKSSGSHRYHY) the composition is skewed to basic residues. Over residues 608 to 633 (YSSSGSGSGSGSSNSNSNHSSSNYLN) the composition is skewed to low complexity. Residues 682–742 (ESSITNCNLC…ICLMCFDAVK (61 aa)) form an FYVE-type zinc finger. 8 residues coordinate Zn(2+): Cys-688, Cys-691, Cys-704, Cys-707, Cys-712, Cys-715, Cys-734, and Cys-737. The RING-type; degenerate zinc finger occupies 688–738 (CNLCDNTFTIIRRTHHCRACGGVFCEACSNQKVCLYGFGVNNKVRICLMCF).

It belongs to the arrestin family.

The sequence is that of Arrestin domain-containing protein D (adcD) from Dictyostelium discoideum (Social amoeba).